We begin with the raw amino-acid sequence, 443 residues long: MSEMTPREIVHELDRHIIGQAEAKRAVAIALRNRWRRMQLSNELRQEVAPKNILMIGPTGVGKTEIARRLAKLANAPFIKVEATKFTEVGYVGKEVDTIIRDLTDMALKMMREQEMEKVRFRAHEAAEERVLDVLLPPARSNWGEAEKSETGTHTRQIFRKKLREGELDDKEIEIDVAAPQMGVEIMAPPGMEEMTNQLQGLFQNMSAGNTHKRKLKVKDALKQLVEEEAGRLLNPEELKEKTIHAVENNGIVFIDEFDKICKRGESSGPDVSREGVQRDLLPLIEGCTVNTKHGMVRTDHILFIASGAFQIAKPSDLIPELQGRLPIRVELKNLTVDDFERILTEPNASLTEQYQALMATEQVKIEFTAEGIRSIAEAAWQVNERTENIGARRLHTVLEKLMEDISYDAADNAGQLFSIDAEYVNRYLGALIEDEDLSRFIL.

Residues I18, G60 to E65, D256, E321, and R393 contribute to the ATP site.

It belongs to the ClpX chaperone family. HslU subfamily. In terms of assembly, a double ring-shaped homohexamer of HslV is capped on each side by a ring-shaped HslU homohexamer. The assembly of the HslU/HslV complex is dependent on binding of ATP.

It is found in the cytoplasm. In terms of biological role, ATPase subunit of a proteasome-like degradation complex; this subunit has chaperone activity. The binding of ATP and its subsequent hydrolysis by HslU are essential for unfolding of protein substrates subsequently hydrolyzed by HslV. HslU recognizes the N-terminal part of its protein substrates and unfolds these before they are guided to HslV for hydrolysis. The chain is ATP-dependent protease ATPase subunit HslU from Tolumonas auensis (strain DSM 9187 / NBRC 110442 / TA 4).